A 57-amino-acid polypeptide reads, in one-letter code: UPF0391 membrane protein Smed_4051 (57 aa).

The next 2 membrane-spanning stretches (helical) occupy residues 4-24 (WALI…SGIS) and 33-53 (ILFY…LAVG).

The protein belongs to the UPF0391 family.

The protein resides in the cell membrane. This chain is UPF0391 membrane protein Smed_4051, found in Sinorhizobium medicae (strain WSM419) (Ensifer medicae).